The chain runs to 374 residues: DNA replication and repair protein RecF (374 aa).

Gly-34–Thr-41 contacts ATP.

Belongs to the RecF family.

Its subcellular location is the cytoplasm. Functionally, the RecF protein is involved in DNA metabolism; it is required for DNA replication and normal SOS inducibility. RecF binds preferentially to single-stranded, linear DNA. It also seems to bind ATP. The protein is DNA replication and repair protein RecF of Rhizobium johnstonii (strain DSM 114642 / LMG 32736 / 3841) (Rhizobium leguminosarum bv. viciae).